Here is a 992-residue protein sequence, read N- to C-terminus: P3N-PIPO polyprotein (992 aa).

Positions threonine 168–tyrosine 308 constitute a Peptidase S30 domain. Catalysis depends on for P1 proteinase activity residues histidine 221, glutamate 230, and serine 262. Residues lysine 361–cysteine 364 carry the Involved in interaction with stylet and aphid transmission motif. Residues proline 617 to lysine 619 carry the Involved in virions binding and aphid transmission motif. The 123-residue stretch at methionine 643 to glycine 765 folds into the Peptidase C6 domain. Catalysis depends on for helper component proteinase activity residues cysteine 651 and histidine 724.

The protein belongs to the potyviridae P3N-PIPO polyprotein family. In terms of assembly, interacts (via PIPO domain) with host PCaP1 protein; this interaction may help to anchor the movement complex to the plasma membrane from which the complex could move to the plasmodesmata. In terms of processing, potyviral RNA is expressed as two polyproteins which undergo post-translational proteolytic processing. Genome polyprotein is processed by NIa-pro, P1 and HC-pro proteinases resulting in the production of at least ten individual proteins. P3N-PIPO is cleaved by P1 and HC-pro proteinases resulting in the production of three individual proteins. The P1 proteinase and the HC-pro cleave only their respective C-termini autocatalytically.

The protein resides in the host cell junction. The protein localises to the host plasmodesma. The enzyme catalyses Hydrolyzes a Gly-|-Gly bond at its own C-terminus, commonly in the sequence -Tyr-Xaa-Val-Gly-|-Gly, in the processing of the potyviral polyprotein.. Required for aphid transmission and also has proteolytic activity. Only cleaves a Gly-Gly dipeptide at its own C-terminus. Interacts with virions and aphid stylets. Acts as a suppressor of RNA-mediated gene silencing, also known as post-transcriptional gene silencing (PTGS), a mechanism of plant viral defense that limits the accumulation of viral RNAs. May have RNA-binding activity. Its function is as follows. Allows efficient cell to cell propagation, by bypassing the host cell wall barrier. Transports viral genome to neighboring plant cells directly through plasmosdesmata, without any budding. This is P3N-PIPO polyprotein from Glycine max (Soybean).